The following is a 206-amino-acid chain: MKPLFPMLTAAAIAAGLAAPAQASAVAQLKAFVSGSKTLSADFNQTVTNKGKREEASGRLEIARPGKFRWEYTKPYAQLIVGDGKTLWIYDQDLAQVTRKAQGAALGSSPAALLAGNNEIERSYKLNEAGKQGDLEWLAASPKKQDNTFSAIRMGFKNNVLVEMQLTDSFGNDTRIVFSQQRQNAALPPARFAFAPPKGVDVVSGD.

The first 23 residues, 1-23 (MKPLFPMLTAAAIAAGLAAPAQA), serve as a signal peptide directing secretion.

It belongs to the LolA family. As to quaternary structure, monomer.

The protein resides in the periplasm. In terms of biological role, participates in the translocation of lipoproteins from the inner membrane to the outer membrane. Only forms a complex with a lipoprotein if the residue after the N-terminal Cys is not an aspartate (The Asp acts as a targeting signal to indicate that the lipoprotein should stay in the inner membrane). The chain is Outer-membrane lipoprotein carrier protein from Chromobacterium violaceum (strain ATCC 12472 / DSM 30191 / JCM 1249 / CCUG 213 / NBRC 12614 / NCIMB 9131 / NCTC 9757 / MK).